Consider the following 378-residue polypeptide: Acetylornithine deacetylase (378 aa).

His76 contributes to the Zn(2+) binding site. Residue Asp78 is part of the active site. Zn(2+) is bound at residue Asp108. The active site involves Glu140. Zn(2+)-binding residues include Glu141, Glu165, and His351.

The protein belongs to the peptidase M20A family. ArgE subfamily. As to quaternary structure, homodimer. It depends on Zn(2+) as a cofactor. Requires Co(2+) as cofactor. The cofactor is glutathione.

The protein resides in the cytoplasm. It carries out the reaction N(2)-acetyl-L-ornithine + H2O = L-ornithine + acetate. It functions in the pathway amino-acid biosynthesis; L-arginine biosynthesis; L-ornithine from N(2)-acetyl-L-ornithine (linear): step 1/1. In terms of biological role, catalyzes the hydrolysis of the amide bond of N(2)-acetylated L-amino acids. Cleaves the acetyl group from N-acetyl-L-ornithine to form L-ornithine, an intermediate in L-arginine biosynthesis pathway, and a branchpoint in the synthesis of polyamines. The polypeptide is Acetylornithine deacetylase (Vibrio campbellii (strain ATCC BAA-1116)).